The following is a 393-amino-acid chain: Formate-dependent phosphoribosylglycinamide formyltransferase (393 aa).

N(1)-(5-phospho-beta-D-ribosyl)glycinamide-binding positions include 22 to 23 and Glu82; that span reads EL. Residues Arg114, Lys155, 160–165, 195–198, and Glu203 contribute to the ATP site; these read SSGKGQ and EGFI. Residues 119–308 enclose the ATP-grasp domain; sequence RLAAEELKLP…QFALHARAIL (190 aa). Mg(2+)-binding residues include Glu267 and Glu279. Residues Asp286, Lys356, and 363-364 contribute to the N(1)-(5-phospho-beta-D-ribosyl)glycinamide site; that span reads RR.

It belongs to the PurK/PurT family. As to quaternary structure, homodimer.

It catalyses the reaction N(1)-(5-phospho-beta-D-ribosyl)glycinamide + formate + ATP = N(2)-formyl-N(1)-(5-phospho-beta-D-ribosyl)glycinamide + ADP + phosphate + H(+). Its pathway is purine metabolism; IMP biosynthesis via de novo pathway; N(2)-formyl-N(1)-(5-phospho-D-ribosyl)glycinamide from N(1)-(5-phospho-D-ribosyl)glycinamide (formate route): step 1/1. In terms of biological role, involved in the de novo purine biosynthesis. Catalyzes the transfer of formate to 5-phospho-ribosyl-glycinamide (GAR), producing 5-phospho-ribosyl-N-formylglycinamide (FGAR). Formate is provided by PurU via hydrolysis of 10-formyl-tetrahydrofolate. This chain is Formate-dependent phosphoribosylglycinamide formyltransferase, found in Pseudomonas syringae pv. tomato (strain ATCC BAA-871 / DC3000).